The primary structure comprises 123 residues: UPF0102 protein PSEEN4497 (123 aa).

The protein belongs to the UPF0102 family.

This Pseudomonas entomophila (strain L48) protein is UPF0102 protein PSEEN4497.